A 602-amino-acid chain; its full sequence is Raftlin (602 aa).

Gly-2 carries N-myristoyl glycine lipidation. A lipid anchor (S-palmitoyl cysteine) is attached at Cys-3. Polar residues predominate over residues 178–195; that stretch reads TPASNNSVQSRDNKNVSN. Disordered stretches follow at residues 178–282, 451–495, and 524–567; these read TPAS…RCSK, KKES…EVTE, and NETA…QSAP. Composition is skewed to basic and acidic residues over residues 197 to 209 and 244 to 265; these read PEDHASLDGEKID and PDCKSAKGSKEQHEHPGGREAP. Basic residues predominate over residues 468–477; sequence KPMKKSRKTK.

This sequence belongs to the raftlin family.

The protein resides in the cell membrane. In terms of biological role, may play a pivotal role in the formation and/or maintenance of lipid rafts. May regulate B-cell antigen receptor-mediated signaling. The chain is Raftlin (RFTN1) from Gallus gallus (Chicken).